The primary structure comprises 116 residues: Neuropeptide Y receptor type 1 (116 aa).

A helical membrane pass occupies residues 1-6; that stretch reads LVLIAV. Residues 7–24 are Cytoplasmic-facing; it reads ERHQLIINPRGWRPSNRH. Residues 25 to 45 traverse the membrane as a helical segment; that stretch reads AYVGIAVIWVLAVASSLPFLI. Topologically, residues 46 to 81 are extracellular; sequence YQVLTDEPFQNVTLDAFKDKYVCFDKFPSDSHRLSY. Residue Asn-56 is glycosylated (N-linked (GlcNAc...) asparagine). Residues 82–102 form a helical membrane-spanning segment; that stretch reads TTLLLVLQYFGPLCFIFICYF. At 103–116 the chain is on the cytoplasmic side; the sequence is KIYIRLKRRNNMMD.

Belongs to the G-protein coupled receptor 1 family.

It is found in the cell membrane. Receptor for neuropeptide Y and peptide YY. This Ovis aries (Sheep) protein is Neuropeptide Y receptor type 1 (NPY1R).